Consider the following 709-residue polypeptide: ATP-binding cassette sub-family F member 3 (709 aa).

A2 is modified (N-acetylalanine). The residue at position 83 (S83) is a Phosphoserine. Residues 129–143 (RLKAKQEKRSEKETL) show a composition bias toward basic and acidic residues. The tract at residues 129 to 171 (RLKAKQEKRSEKETLKTSNPLVLEEASASQAGSRKESRLESSG) is disordered. S155, S157, and S161 each carry phosphoserine. Residues 161–171 (SRKESRLESSG) show a composition bias toward basic and acidic residues. 2 ABC transporter domains span residues 178 to 424 (VRIE…LNQQ) and 492 to 707 (LQLD…RREG). ATP is bound at residue 210 to 217 (GRNGLGKT). S283 carries the phosphoserine modification. ATP is bound at residue 525 to 532 (GENGAGKS).

It belongs to the ABC transporter superfamily. ABCF family. EF3 subfamily.

Functionally, displays an antiviral effect against flaviviruses such as west Nile virus (WNV) in the presence of OAS1B. The polypeptide is ATP-binding cassette sub-family F member 3 (Abcf3) (Mus musculus (Mouse)).